We begin with the raw amino-acid sequence, 104 residues long: Flagellar hook-basal body complex protein FliE (104 aa).

It belongs to the FliE family.

It is found in the bacterial flagellum basal body. This is Flagellar hook-basal body complex protein FliE from Serratia proteamaculans (strain 568).